Here is an 891-residue protein sequence, read N- to C-terminus: uncharacterized protein (891 aa).

Residues 48–64 (GHKKPRSESRKKYDAKK) show a composition bias toward basic and acidic residues. The disordered stretch occupies residues 48–86 (GHKKPRSESRKKYDAKKQHQSSHFATPVKGVESSEPTEK). A phosphoserine mark is found at S261, S263, S265, and S268. A disordered region spans residues 795–822 (QRTFSNESPRAVDSGFSRTSTPFSESTS). Polar residues predominate over residues 810–822 (FSRTSTPFSESTS).

It localises to the nucleus. This is an uncharacterized protein from Schizosaccharomyces pombe (strain 972 / ATCC 24843) (Fission yeast).